The primary structure comprises 321 residues: Phosphopantothenate--cysteine ligase 1 (321 aa).

This sequence belongs to the PPC synthetase family. As to quaternary structure, homodimer.

It carries out the reaction (R)-4'-phosphopantothenate + L-cysteine + CTP = N-[(R)-4-phosphopantothenoyl]-L-cysteine + CMP + diphosphate + H(+). It functions in the pathway cofactor biosynthesis; coenzyme A biosynthesis; CoA from (R)-pantothenate: step 2/5. Catalyzes the first step in the biosynthesis of coenzyme A from vitamin B5, where cysteine is conjugated to 4'-phosphopantothenate to form 4-phosphopantothenoylcysteine. The protein is Phosphopantothenate--cysteine ligase 1 of Oryza sativa subsp. japonica (Rice).